The following is a 338-amino-acid chain: Tryptophan--tRNA ligase (338 aa).

Residues Q11–S13 and G19–N20 contribute to the ATP site. Residues P12–N20 carry the 'HIGH' region motif. D135 contacts L-tryptophan. Residues G147–D149, V189, and K198–S202 each bind ATP. The short motif at K198–S202 is the 'KMSKS' region element.

The protein belongs to the class-I aminoacyl-tRNA synthetase family. As to quaternary structure, homodimer.

It is found in the cytoplasm. It catalyses the reaction tRNA(Trp) + L-tryptophan + ATP = L-tryptophyl-tRNA(Trp) + AMP + diphosphate + H(+). Its function is as follows. Catalyzes the attachment of tryptophan to tRNA(Trp). The chain is Tryptophan--tRNA ligase from Vibrio vulnificus (strain CMCP6).